A 399-amino-acid polypeptide reads, in one-letter code: Chorismate synthase (399 aa).

The interval 41–72 is disordered; it reads IQKDLDRRKPGQSMITTSRGEPDKVTINSGIQ. Arginine 48 lines the NADP(+) pocket. FMN is bound by residues 125 to 127, glycine 288, 303 to 307, and arginine 330; these read RSS and HAPVS. 2 stretches are compositionally biased toward basic and acidic residues: residues 363 to 377 and 389 to 399; these read PDRLDGRPGEYDTDY and ADTHAKTIDDD. Residues 363-399 are disordered; sequence PDRLDGRPGEYDTDYHPSSPQNDPEDADTHAKTIDDD.

It belongs to the chorismate synthase family. The cofactor is FMNH2.

The catalysed reaction is 5-O-(1-carboxyvinyl)-3-phosphoshikimate = chorismate + phosphate. Its pathway is metabolic intermediate biosynthesis; chorismate biosynthesis; chorismate from D-erythrose 4-phosphate and phosphoenolpyruvate: step 7/7. Functionally, catalyzes the anti-1,4-elimination of the C-3 phosphate and the C-6 proR hydrogen from 5-enolpyruvylshikimate-3-phosphate (EPSP) to yield chorismate, which is the branch point compound that serves as the starting substrate for the three terminal pathways of aromatic amino acid biosynthesis. This reaction introduces a second double bond into the aromatic ring system. The polypeptide is Chorismate synthase (Haloarcula marismortui (strain ATCC 43049 / DSM 3752 / JCM 8966 / VKM B-1809) (Halobacterium marismortui)).